The chain runs to 113 residues: Large ribosomal subunit protein uL24 (113 aa).

It belongs to the universal ribosomal protein uL24 family. In terms of assembly, part of the 50S ribosomal subunit.

One of two assembly initiator proteins, it binds directly to the 5'-end of the 23S rRNA, where it nucleates assembly of the 50S subunit. Functionally, one of the proteins that surrounds the polypeptide exit tunnel on the outside of the subunit. The chain is Large ribosomal subunit protein uL24 from Micrococcus luteus (strain ATCC 4698 / DSM 20030 / JCM 1464 / CCM 169 / CCUG 5858 / IAM 1056 / NBRC 3333 / NCIMB 9278 / NCTC 2665 / VKM Ac-2230) (Micrococcus lysodeikticus).